Here is a 449-residue protein sequence, read N- to C-terminus: UDP-N-acetylglucosamine 1-carboxyvinyltransferase (449 aa).

Residue 51 to 52 coordinates phosphoenolpyruvate; that stretch reads KN. Residue Arg-121 participates in UDP-N-acetyl-alpha-D-glucosamine binding. Cys-145 (proton donor) is an active-site residue. Residue Cys-145 is modified to 2-(S-cysteinyl)pyruvic acid O-phosphothioketal. Residues 150-154, Asp-333, and Ile-355 each bind UDP-N-acetyl-alpha-D-glucosamine; that span reads RPVDQ.

It belongs to the EPSP synthase family. MurA subfamily.

It is found in the cytoplasm. It catalyses the reaction phosphoenolpyruvate + UDP-N-acetyl-alpha-D-glucosamine = UDP-N-acetyl-3-O-(1-carboxyvinyl)-alpha-D-glucosamine + phosphate. The protein operates within cell wall biogenesis; peptidoglycan biosynthesis. Cell wall formation. Adds enolpyruvyl to UDP-N-acetylglucosamine. This Burkholderia mallei (strain ATCC 23344) protein is UDP-N-acetylglucosamine 1-carboxyvinyltransferase.